We begin with the raw amino-acid sequence, 90 residues long: Large ribosomal subunit protein eL31 (90 aa).

It belongs to the eukaryotic ribosomal protein eL31 family.

This Natronomonas pharaonis (strain ATCC 35678 / DSM 2160 / CIP 103997 / JCM 8858 / NBRC 14720 / NCIMB 2260 / Gabara) (Halobacterium pharaonis) protein is Large ribosomal subunit protein eL31.